The following is a 146-amino-acid chain: Transcriptional regulator MraZ (146 aa).

SpoVT-AbrB domains lie at 4 to 46 (SYEK…SKKS) and 75 to 118 (TIEV…SKEK).

Belongs to the MraZ family. Forms oligomers.

The protein localises to the cytoplasm. It localises to the nucleoid. In Mycoplasma mobile (strain ATCC 43663 / 163K / NCTC 11711) (Mesomycoplasma mobile), this protein is Transcriptional regulator MraZ.